Reading from the N-terminus, the 536-residue chain is Putative cysteine ligase BshC (536 aa).

It belongs to the BshC family.

Its function is as follows. Involved in bacillithiol (BSH) biosynthesis. May catalyze the last step of the pathway, the addition of cysteine to glucosamine malate (GlcN-Mal) to generate BSH. This Anoxybacillus flavithermus (strain DSM 21510 / WK1) protein is Putative cysteine ligase BshC.